The chain runs to 474 residues: ATP synthase subunit beta (474 aa).

151-158 (GGAGVGKT) contributes to the ATP binding site.

The protein belongs to the ATPase alpha/beta chains family. F-type ATPases have 2 components, CF(1) - the catalytic core - and CF(0) - the membrane proton channel. CF(1) has five subunits: alpha(3), beta(3), gamma(1), delta(1), epsilon(1). CF(0) has four main subunits: a(1), b(1), b'(1) and c(9-12).

The protein localises to the cell inner membrane. The enzyme catalyses ATP + H2O + 4 H(+)(in) = ADP + phosphate + 5 H(+)(out). Functionally, produces ATP from ADP in the presence of a proton gradient across the membrane. The catalytic sites are hosted primarily by the beta subunits. The protein is ATP synthase subunit beta of Roseobacter denitrificans (strain ATCC 33942 / OCh 114) (Erythrobacter sp. (strain OCh 114)).